Reading from the N-terminus, the 161-residue chain is MPSFDTVCEPNLPEVKNAVENTAKEIATRFDFKGTAAAVELKDKEITMIGDAEFQLVQVEDILRAKLTKRSVDVRFLDKGDVQKIGGDKVKQVIKVKSGIESEQAKKITRIIKDSKLKVQAAIQGDAVRITGAKRDDLQAAMALIKKDVPDMPLSFNNFRD.

The protein belongs to the YajQ family.

Nucleotide-binding protein. The sequence is that of Nucleotide-binding protein Vapar_3769 from Variovorax paradoxus (strain S110).